The sequence spans 288 residues: MKLQFTKMHGAGNDFVVLDGIHQQIDLTPAQWRALASRHFGVGADQILIVEKPSRPDVDFRYRIVNADGSEVEHCGNGARCFVRFVTDKGMTDKRSVRVEVMNGVITLTLQDDGQVTVDMGAPELEPARVPFRAEGLPTRAEGADTLYGLEVNGRTEWISVVSMGNPHAVQVVDDVENFPVLQDGPVVEHHAAFPNRVNAGFMQVQDRHAIRLRVYERGAGETLACGTGACAAVVAGIRRGLLDSPVRVHTHGGDLTIAWDGGAEPVRMTGPATTVFEGSIDLAALPA.

N13, Q46, and N66 together coordinate substrate. C75 (proton donor) is an active-site residue. Residues 76–77, N166, N199, and 217–218 each bind substrate; these read GN and ER. Catalysis depends on C226, which acts as the Proton acceptor. 227–228 contributes to the substrate binding site; sequence GT.

Belongs to the diaminopimelate epimerase family. As to quaternary structure, homodimer.

It localises to the cytoplasm. The catalysed reaction is (2S,6S)-2,6-diaminopimelate = meso-2,6-diaminopimelate. Its pathway is amino-acid biosynthesis; L-lysine biosynthesis via DAP pathway; DL-2,6-diaminopimelate from LL-2,6-diaminopimelate: step 1/1. In terms of biological role, catalyzes the stereoinversion of LL-2,6-diaminopimelate (L,L-DAP) to meso-diaminopimelate (meso-DAP), a precursor of L-lysine and an essential component of the bacterial peptidoglycan. The chain is Diaminopimelate epimerase from Cupriavidus necator (strain ATCC 17699 / DSM 428 / KCTC 22496 / NCIMB 10442 / H16 / Stanier 337) (Ralstonia eutropha).